Consider the following 69-residue polypeptide: Sperm protamine P1 (69 aa).

The tract at residues 1–69 (MASYRNSRSR…RKRNNNTENK (69 aa)) is disordered. 2 stretches are compositionally biased toward basic residues: residues 7 to 25 (SRSR…RSRV) and 34 to 63 (RSSR…RKRN).

Belongs to the protamine P1 family. As to expression, testis.

The protein resides in the nucleus. Its subcellular location is the chromosome. In terms of biological role, protamines substitute for histones in the chromatin of sperm during the haploid phase of spermatogenesis. They compact sperm DNA into a highly condensed, stable and inactive complex. This chain is Sperm protamine P1 (PRM1), found in Perameles gunnii (Eastern barred bandicoot).